The primary structure comprises 478 residues: Protein nucleotidyltransferase YdiU (478 aa).

ATP is bound by residues glycine 84, glycine 86, arginine 87, lysine 107, aspartate 119, glycine 120, arginine 170, and arginine 177. Aspartate 246 serves as the catalytic Proton acceptor. Mg(2+) is bound by residues asparagine 247 and aspartate 256. ATP is bound at residue aspartate 256.

This sequence belongs to the SELO family. Mg(2+) is required as a cofactor. Mn(2+) serves as cofactor.

The catalysed reaction is L-seryl-[protein] + ATP = 3-O-(5'-adenylyl)-L-seryl-[protein] + diphosphate. It carries out the reaction L-threonyl-[protein] + ATP = 3-O-(5'-adenylyl)-L-threonyl-[protein] + diphosphate. It catalyses the reaction L-tyrosyl-[protein] + ATP = O-(5'-adenylyl)-L-tyrosyl-[protein] + diphosphate. The enzyme catalyses L-histidyl-[protein] + UTP = N(tele)-(5'-uridylyl)-L-histidyl-[protein] + diphosphate. The catalysed reaction is L-seryl-[protein] + UTP = O-(5'-uridylyl)-L-seryl-[protein] + diphosphate. It carries out the reaction L-tyrosyl-[protein] + UTP = O-(5'-uridylyl)-L-tyrosyl-[protein] + diphosphate. In terms of biological role, nucleotidyltransferase involved in the post-translational modification of proteins. It can catalyze the addition of adenosine monophosphate (AMP) or uridine monophosphate (UMP) to a protein, resulting in modifications known as AMPylation and UMPylation. This chain is Protein nucleotidyltransferase YdiU, found in Escherichia coli O1:K1 / APEC.